The chain runs to 1245 residues: TAL effector protein Brg11 (1245 aa).

2 disordered regions span residues 1–87 (MRIG…LVPE) and 173–205 (CPQA…PTFL). Positions 67-87 (PRRPLPVAPASAPPAPSLVPE) are enriched in pro residues. The Nuclear localization signal 1 signature appears at 185–191 (RSARARR). Residues 286–320 (LTRAHIVDIARQRSGDLALQALLPVATALTAAPLR) form a Cryptic repeat -1 repeat. Residues 321 to 354 (LSASQIATVAQYGERPAIQALYRLRRKLTRAPLH) form a Cryptic repeat 0 repeat. Core repeat repeat units follow at residues 355-389 (LTPQ…APYR), 390-424 (LSTE…APYV), 425-459 (LDTE…APYA), 460-494 (LSTE…APYA), 495-529 (LSTE…VPYA), 530-564 (LSTE…APYA), 565-599 (LSTA…APYG), 600-634 (LSTE…APYA), 635-669 (LSTE…APYA), 670-704 (LSTA…APYA), 705-739 (LSTE…APYA), 740-774 (LNTE…APYA), 775-809 (LSTA…APYA), 810-844 (LSTE…APYG), 845-879 (LSTA…TPYD), and 880-914 (LNTA…APYA). A Cryptic repeat +1 repeat occupies 915-948 (LSTAQVVAIACISGQQALEAIEAHMPTLRQASHS). The Cryptic repeat +2 repeat unit spans residues 949-982 (LSPERVAAIACIGGRSAVEAVRQGLPVKAIRRIR). 3 consecutive short sequence motifs (nuclear localization signal) follow at residues 980–983 (RIRR), 1108–1111 (HRKR), and 1145–1148 (RRKR). Positions 1096–1138 (SPGMAGQSACSPHRKRPAETAIAPRSIRRSPNNAGQPSEPWPD) are disordered. Residues 1237–1245 (DWLLQILET) are activation domain.

It belongs to the transcription activator-like effector (TALE) family. RipTAL/RTL subfamily.

The protein localises to the secreted. Its subcellular location is the host nucleus. Functionally, exported into plant cells, where it is targeted to the nucleus and probably acts as a transcription factor. Binds DNA in a sequence-specific manner. May contribute to plant pathogenicity. This Ralstonia nicotianae (strain ATCC BAA-1114 / GMI1000) (Ralstonia solanacearum) protein is TAL effector protein Brg11.